The chain runs to 544 residues: CTP synthase (544 aa).

The interval 1–266 is amidoligase domain; sequence MTKFIFVTGG…DDLICERFGL (266 aa). CTP is bound at residue Ser13. Ser13 lines the UTP pocket. Residues 14–19 and Asp71 each bind ATP; that span reads SLGKGI. Mg(2+) is bound by residues Asp71 and Glu140. CTP is bound by residues 147-149, 187-192, and Lys223; these read DIE and KTKPTQ. UTP contacts are provided by residues 187 to 192 and Lys223; that span reads KTKPTQ. A Glutamine amidotransferase type-1 domain is found at 291-543; it reads TVAMVGKYVE…VKAAKNYSEA (253 aa). L-glutamine is bound at residue Gly354. Cys381 functions as the Nucleophile; for glutamine hydrolysis in the catalytic mechanism. Residues 382-385, Glu404, and Arg471 each bind L-glutamine; that span reads LGMQ. Residues His516 and Glu518 contribute to the active site.

This sequence belongs to the CTP synthase family. In terms of assembly, homotetramer.

It carries out the reaction UTP + L-glutamine + ATP + H2O = CTP + L-glutamate + ADP + phosphate + 2 H(+). The catalysed reaction is L-glutamine + H2O = L-glutamate + NH4(+). It catalyses the reaction UTP + NH4(+) + ATP = CTP + ADP + phosphate + 2 H(+). The protein operates within pyrimidine metabolism; CTP biosynthesis via de novo pathway; CTP from UDP: step 2/2. Allosterically activated by GTP, when glutamine is the substrate; GTP has no effect on the reaction when ammonia is the substrate. The allosteric effector GTP functions by stabilizing the protein conformation that binds the tetrahedral intermediate(s) formed during glutamine hydrolysis. Inhibited by the product CTP, via allosteric rather than competitive inhibition. In terms of biological role, catalyzes the ATP-dependent amination of UTP to CTP with either L-glutamine or ammonia as the source of nitrogen. Regulates intracellular CTP levels through interactions with the four ribonucleotide triphosphates. The chain is CTP synthase from Psychrobacter cryohalolentis (strain ATCC BAA-1226 / DSM 17306 / VKM B-2378 / K5).